Reading from the N-terminus, the 930-residue chain is Protein translocase subunit SecA (930 aa).

Residues glutamine 83, 101-105, and aspartate 491 each bind ATP; that span reads GEGKT.

The protein belongs to the SecA family. As to quaternary structure, monomer and homodimer. Part of the essential Sec protein translocation apparatus which comprises SecA, SecYEG and auxiliary proteins SecDF. Other proteins may also be involved.

It localises to the cell inner membrane. Its subcellular location is the cellular thylakoid membrane. It is found in the cytoplasm. It catalyses the reaction ATP + H2O + cellular proteinSide 1 = ADP + phosphate + cellular proteinSide 2.. Functionally, part of the Sec protein translocase complex. Interacts with the SecYEG preprotein conducting channel. Has a central role in coupling the hydrolysis of ATP to the transfer of proteins into and across the cell membrane, serving as an ATP-driven molecular motor driving the stepwise translocation of polypeptide chains across the membrane. Its function is as follows. Probably participates in protein translocation into and across both the cytoplasmic and thylakoid membranes in cyanobacterial cells. The polypeptide is Protein translocase subunit SecA (Trichormus variabilis (strain ATCC 29413 / PCC 7937) (Anabaena variabilis)).